The chain runs to 327 residues: Expansin-B7 (327 aa).

Residues 1-30 form the signal peptide; that stretch reads MAGRSRRRSFWSVGVAAALLCLLAAHGCSA. The tract at residues 30-88 is disordered; the sequence is AKHHKPKPTPGGISGNASSSSSNSSTPSIPPPVAPTPTAPTPPIPSPGTGSSNGSSGGG. Positions 44–56 are enriched in low complexity; it reads GNASSSSSNSSTP. Asn-45 and Asn-52 each carry an N-linked (GlcNAc...) asparagine glycan. Residues 57–75 show a composition bias toward pro residues; the sequence is SIPPPVAPTPTAPTPPIPS. An N-linked (GlcNAc...) asparagine glycan is attached at Asn-82. An Expansin-like EG45 domain is found at 112 to 218; the sequence is GGACGFKNVN…RRVPCQYPGL (107 aa). 3 disulfide bridges follow: Cys-115-Cys-143, Cys-146-Cys-213, and Cys-151-Cys-157. Positions 231–322 constitute an Expansin-like CBD domain; sequence VYMAILVEYE…DWQPNTVYSS (92 aa). An N-linked (GlcNAc...) asparagine glycan is attached at Asn-298.

This sequence belongs to the expansin family. Expansin B subfamily.

Its subcellular location is the secreted. The protein resides in the cell wall. It is found in the membrane. Functionally, may cause loosening and extension of plant cell walls by disrupting non-covalent bonding between cellulose microfibrils and matrix glucans. No enzymatic activity has been found. May be required for rapid internodal elongation in deepwater rice during submergence. This chain is Expansin-B7 (EXPB7), found in Oryza sativa subsp. japonica (Rice).